Reading from the N-terminus, the 490-residue chain is Trigger factor (490 aa).

Residues 162–243 (GDFVSIDLSA…VGSIKERELP (82 aa)) enclose the PPIase FKBP-type domain. The segment at 433 to 490 (VDAVLGPRRGGADEAGAEAEAAEEKPAKAKKSADSEKTDKSEKAEKKSKKKSKDDDAE) is disordered. Positions 454–477 (AEEKPAKAKKSADSEKTDKSEKAE) are enriched in basic and acidic residues.

Belongs to the FKBP-type PPIase family. Tig subfamily.

It is found in the cytoplasm. The enzyme catalyses [protein]-peptidylproline (omega=180) = [protein]-peptidylproline (omega=0). Involved in protein export. Acts as a chaperone by maintaining the newly synthesized protein in an open conformation. Functions as a peptidyl-prolyl cis-trans isomerase. This is Trigger factor from Mycobacteroides abscessus (strain ATCC 19977 / DSM 44196 / CCUG 20993 / CIP 104536 / JCM 13569 / NCTC 13031 / TMC 1543 / L948) (Mycobacterium abscessus).